We begin with the raw amino-acid sequence, 193 residues long: Thymidylate kinase (193 aa).

An ATP-binding site is contributed by 7 to 14 (GIDGCGKS).

Belongs to the thymidylate kinase family.

It carries out the reaction dTMP + ATP = dTDP + ADP. Its function is as follows. Phosphorylation of dTMP to form dTDP in both de novo and salvage pathways of dTTP synthesis. The sequence is that of Thymidylate kinase from Coprothermobacter proteolyticus (strain ATCC 35245 / DSM 5265 / OCM 4 / BT).